Here is a 74-residue protein sequence, read N- to C-terminus: Fulgimotoxin (74 aa).

Glutamine 1 carries the post-translational modification Pyrrolidone carboxylic acid. 5 disulfides stabilise this stretch: cysteine 10–cysteine 34, cysteine 13–cysteine 21, cysteine 27–cysteine 51, cysteine 55–cysteine 66, and cysteine 67–cysteine 72.

Belongs to the three-finger toxin family. Ancestral subfamily. Boigatoxin sub-subfamily. In terms of assembly, monomer. In terms of processing, the N-terminus is blocked. Post-translationally, contains 5 disulfide bonds. In terms of tissue distribution, expressed by the venom gland.

It is found in the secreted. Its function is as follows. Reptile-specific three-finger toxin that is lethal at low doses for lizards, but not for mice. Probably acts as a neurotoxin. This chain is Fulgimotoxin, found in Oxybelis fulgidus (Green vine snake).